Consider the following 585-residue polypeptide: Proline--tRNA ligase (585 aa).

K173 is covalently cross-linked (Isoglutamyl lysine isopeptide (Lys-Gln) (interchain with Q-Cter in protein Pup)).

It belongs to the class-II aminoacyl-tRNA synthetase family. ProS type 1 subfamily. As to quaternary structure, homodimer.

It is found in the cytoplasm. The catalysed reaction is tRNA(Pro) + L-proline + ATP = L-prolyl-tRNA(Pro) + AMP + diphosphate. In terms of biological role, catalyzes the attachment of proline to tRNA(Pro) in a two-step reaction: proline is first activated by ATP to form Pro-AMP and then transferred to the acceptor end of tRNA(Pro). As ProRS can inadvertently accommodate and process non-cognate amino acids such as alanine and cysteine, to avoid such errors it has two additional distinct editing activities against alanine. One activity is designated as 'pretransfer' editing and involves the tRNA(Pro)-independent hydrolysis of activated Ala-AMP. The other activity is designated 'posttransfer' editing and involves deacylation of mischarged Ala-tRNA(Pro). The misacylated Cys-tRNA(Pro) is not edited by ProRS. In Mycolicibacterium smegmatis (strain ATCC 700084 / mc(2)155) (Mycobacterium smegmatis), this protein is Proline--tRNA ligase (proS).